The primary structure comprises 526 residues: Nucleobase-ascorbate transporter 4 (526 aa).

A run of 12 helical transmembrane segments spans residues 42 to 62, 69 to 89, 91 to 111, 131 to 151, 157 to 177, 186 to 206, 217 to 237, 282 to 302, 359 to 381, 388 to 410, 420 to 440, and 457 to 477; these read IVML…MGGG, VINT…LFGS, LPVV…ITFS, IQGA…FGLW, FLSP…LLAF, IEIG…LPHL, FAVL…TAAG, AFAM…SFIA, RVVQ…GAVL, IFAA…LLQF, FILG…TEYL, and VIMQ…AFLL.

The protein belongs to the nucleobase:cation symporter-2 (NCS2) (TC 2.A.40) family. As to expression, highly expressed in the root central cylinder. Expressed in the filaments and stigmatic papillae of pollinated flowers and developing siliques.

It localises to the membrane. This is Nucleobase-ascorbate transporter 4 (NAT4) from Arabidopsis thaliana (Mouse-ear cress).